We begin with the raw amino-acid sequence, 114 residues long: Hemerythrin (114 aa).

Residues histidine 26, histidine 55, glutamate 59, histidine 74, histidine 78, histidine 102, and aspartate 107 each contribute to the Fe cation site.

This sequence belongs to the hemerythrin family. As to quaternary structure, homooctamer.

Functionally, hemerythrin is a respiratory protein in blood cells of certain marine worms. The oxygen-binding site in each chain contains two iron atoms. In Phascolopsis gouldii (Peanut worm), this protein is Hemerythrin.